We begin with the raw amino-acid sequence, 255 residues long: uncharacterized protein (255 aa).

A signal peptide spans 1–23; the sequence is MKRLNKLVLYISFLILVISFTAG. Cysteine 24 is lipidated: N-palmitoyl cysteine. Cysteine 24 is lipidated: S-diacylglycerol cysteine.

This sequence belongs to the staphylococcal tandem lipoprotein family.

Its subcellular location is the cell membrane. This is an uncharacterized protein from Staphylococcus aureus (strain N315).